Reading from the N-terminus, the 373-residue chain is Chaperone protein DnaJ (373 aa).

Residues 4–68 form the J domain; the sequence is NYYQILGVSK…QKRAAYDRLG (65 aa). The CR-type zinc-finger motif lies at 136–214; that stretch reads GIEKNINFSS…CHGMGRYHKQ (79 aa). Zn(2+) contacts are provided by C149, C152, C166, C169, C188, C191, C202, and C205. CXXCXGXG motif repeat units follow at residues 149 to 156, 166 to 173, 188 to 195, and 202 to 209; these read CDTCHGSG, CDACSGVG, CHKCQGNG, and CKKCHGMG.

The protein belongs to the DnaJ family. In terms of assembly, homodimer. The cofactor is Zn(2+).

It localises to the cytoplasm. Functionally, participates actively in the response to hyperosmotic and heat shock by preventing the aggregation of stress-denatured proteins and by disaggregating proteins, also in an autonomous, DnaK-independent fashion. Unfolded proteins bind initially to DnaJ; upon interaction with the DnaJ-bound protein, DnaK hydrolyzes its bound ATP, resulting in the formation of a stable complex. GrpE releases ADP from DnaK; ATP binding to DnaK triggers the release of the substrate protein, thus completing the reaction cycle. Several rounds of ATP-dependent interactions between DnaJ, DnaK and GrpE are required for fully efficient folding. Also involved, together with DnaK and GrpE, in the DNA replication of plasmids through activation of initiation proteins. This chain is Chaperone protein DnaJ, found in Rickettsia rickettsii (strain Iowa).